The following is a 362-amino-acid chain: Chorismate synthase (362 aa).

Positions 48 and 54 each coordinate NADP(+). Residues 125-127, 241-242, G286, 301-305, and R327 each bind FMN; these read RSS, NA, and KPTSS.

This sequence belongs to the chorismate synthase family. In terms of assembly, homotetramer. The cofactor is FMNH2.

The enzyme catalyses 5-O-(1-carboxyvinyl)-3-phosphoshikimate = chorismate + phosphate. It functions in the pathway metabolic intermediate biosynthesis; chorismate biosynthesis; chorismate from D-erythrose 4-phosphate and phosphoenolpyruvate: step 7/7. Its function is as follows. Catalyzes the anti-1,4-elimination of the C-3 phosphate and the C-6 proR hydrogen from 5-enolpyruvylshikimate-3-phosphate (EPSP) to yield chorismate, which is the branch point compound that serves as the starting substrate for the three terminal pathways of aromatic amino acid biosynthesis. This reaction introduces a second double bond into the aromatic ring system. The polypeptide is Chorismate synthase (Paramagnetospirillum magneticum (strain ATCC 700264 / AMB-1) (Magnetospirillum magneticum)).